The sequence spans 175 residues: Catabolic 3-dehydroquinase (175 aa).

Catalysis depends on Tyr-26, which acts as the Proton acceptor. Asn-104, His-110, and Asp-117 together coordinate substrate. His-130 acts as the Proton donor in catalysis. Substrate is bound by residues 131 to 132 (VS) and Arg-141.

This sequence belongs to the type-II 3-dehydroquinase family. Homododecamer. Adopts a ring-like structure, composed of an arrangement of two hexameric rings stacked on top of one another.

The catalysed reaction is 3-dehydroquinate = 3-dehydroshikimate + H2O. The protein operates within aromatic compound metabolism; 3,4-dihydroxybenzoate biosynthesis; 3,4-dihydroxybenzoate from 3-dehydroquinate: step 1/2. Functionally, is involved in the catabolism of quinate. Allows the utilization of quinate as carbon source via the beta-ketoadipate pathway. The sequence is that of Catabolic 3-dehydroquinase from Sordaria macrospora (strain ATCC MYA-333 / DSM 997 / K(L3346) / K-hell).